Consider the following 263-residue polypeptide: Type-2Ba cytolytic delta-endotoxin (263 aa).

The protein belongs to the cyt1/cyt2 endotoxin family. Post-translationally, active after proteolytic processing.

Its function is as follows. Kills the larvae of dipteran insects by making pores in the epithelial cell membrane of the insect midgut. This Bacillus thuringiensis subsp. israelensis protein is Type-2Ba cytolytic delta-endotoxin (cyt2Ba1).